A 78-amino-acid polypeptide reads, in one-letter code: Structural DNA-binding protein p10 (78 aa).

Residues 1 to 24 show a composition bias toward low complexity; the sequence is MPTKAGTKSTANKKTTKGSSKSGS. Residues 1-41 form a disordered region; sequence MPTKAGTKSTANKKTTKGSSKSGSPRGHTGKTHAPPSMHSG.

The protein belongs to the asfivirus P10 family.

It is found in the virion. Functionally, may play a role in genome packaging through direct interaction with viral DNA. Binds to ssDNA and dsDNA with the same apparent affinity in vitro. The protein is Structural DNA-binding protein p10 of African swine fever virus (isolate Tick/South Africa/Pretoriuskop Pr4/1996) (ASFV).